The following is a 65-amino-acid chain: Large ribosomal subunit protein bL35 (65 aa).

Belongs to the bacterial ribosomal protein bL35 family.

The chain is Large ribosomal subunit protein bL35 from Oleidesulfovibrio alaskensis (strain ATCC BAA-1058 / DSM 17464 / G20) (Desulfovibrio alaskensis).